The primary structure comprises 120 residues: Crustacean hyperglycemic hormones 1 (120 aa).

The first 24 residues, 1 to 24 (MIAFRAVWSALLASLLLLLLAPSA), serve as a signal peptide directing secretion. 3 disulfide bridges follow: Cys53/Cys89, Cys69/Cys85, and Cys72/Cys98. At Val118 the chain carries Valine amide.

This sequence belongs to the arthropod CHH/MIH/GIH/VIH hormone family. As to expression, produced by the medulla terminalis X-organ in the eyestalks and transported to the sinus gland where they are stored and released.

Its subcellular location is the secreted. In terms of biological role, hormone found in the sinus gland of isopods and decapods which controls the blood sugar level. Has a secretagogue action over the amylase released from the midgut gland. May act as a stress hormone and may be involved in the control of molting and reproduction. The sequence is that of Crustacean hyperglycemic hormones 1 from Penaeus japonicus (Kuruma prawn).